We begin with the raw amino-acid sequence, 135 residues long: Large ribosomal subunit protein uL16c (135 aa).

Belongs to the universal ribosomal protein uL16 family. In terms of assembly, part of the 50S ribosomal subunit.

It localises to the plastid. The protein resides in the chloroplast. The protein is Large ribosomal subunit protein uL16c of Nandina domestica (Heavenly bamboo).